Consider the following 91-residue polypeptide: YcgL domain-containing protein Ent638_2370 (91 aa).

The 85-residue stretch at 1-85 folds into the YcgL domain; the sequence is MFCVIYRSAK…PPENLLKQHL (85 aa).

The polypeptide is YcgL domain-containing protein Ent638_2370 (Enterobacter sp. (strain 638)).